A 168-amino-acid polypeptide reads, in one-letter code: Pathogenesis-related protein 1A (168 aa).

Positions Met1–Ala30 are cleaved as a signal peptide. The SCP domain maps to Leu38–Tyr156.

It belongs to the CRISP family. Post-translationally, three disulfide bonds are present.

Its subcellular location is the vacuole. In terms of biological role, probably involved in the defense reaction of plants against pathogens. This is Pathogenesis-related protein 1A from Nicotiana tabacum (Common tobacco).